We begin with the raw amino-acid sequence, 522 residues long: BTB/POZ domain-containing protein 3 (522 aa).

The tract at residues 25–44 is disordered; it reads RSKKSSKKANTSSSSSNSSK. A compositionally biased stretch (low complexity) spans 32-44; it reads KANTSSSSSNSSK. One can recognise a BTB domain in the interval 120 to 190; the sequence is ADVHFVVGPP…IYCDEIDLAA (71 aa). In terms of domain architecture, BACK spans 235–300; that stretch reads FEEPDLTQRC…NWAEVECQRQ (66 aa).

The protein localises to the cytoplasm. The protein resides in the cytosol. Its subcellular location is the nucleus. Acts as a key regulator of dendritic field orientation during development of sensory cortex. Also directs dendrites toward active axon terminals when ectopically expressed. This chain is BTB/POZ domain-containing protein 3 (BTBD3), found in Homo sapiens (Human).